A 404-amino-acid chain; its full sequence is Coenzyme F(430) synthetase (404 aa).

112 to 117 lines the ATP pocket; it reads GVKGKT.

It belongs to the MurCDEF family.

The enzyme catalyses 15,17(3)-seco-F430-17(3)-acid + ATP = coenzyme F430 + ADP + phosphate. In terms of biological role, involved in the biosynthesis of the unique nickel-containing tetrapyrrole coenzyme F430, the prosthetic group of methyl-coenzyme M reductase (MCR), which plays a key role in methanogenesis and anaerobic methane oxidation. Catalyzes the activation the g-propionate side chain of 15,17(3)-seco-F430-17(3)-acid (seco-F430) for intramolecular C-C bond formation to yield the carbocyclic F ring of coenzyme F430. The protein is Coenzyme F(430) synthetase of Methanocaldococcus jannaschii (strain ATCC 43067 / DSM 2661 / JAL-1 / JCM 10045 / NBRC 100440) (Methanococcus jannaschii).